A 170-amino-acid chain; its full sequence is MKDVYLYIVEKSVALEFDSAEYGRLARKTVELLYDRKEELTDDRIAILLNISTAETRRILQYLMKQNLVGVKKRSTEDYRIEYTWYVNDEVISQAVKYRAKVVREKISLMIKALTEEAFYVCPNCFMRYPVEEVMERGGVCPICGSHLEYVENVEEINKLTKVFEKLDKI.

Residues 1-93 (MKDVYLYIVE…TWYVNDEVIS (93 aa)) form the HTH TFE/IIEalpha-type domain.

The protein belongs to the TFE family. As to quaternary structure, monomer. Interaction with RNA polymerase subunits RpoF and RpoE is necessary for Tfe stimulatory transcription activity. Able to interact with Tbp and RNA polymerase in the absence of DNA promoter. Interacts both with the preinitiation and elongation complexes.

Transcription factor that plays a role in the activation of archaeal genes transcribed by RNA polymerase. Facilitates transcription initiation by enhancing TATA-box recognition by TATA-box-binding protein (Tbp), and transcription factor B (Tfb) and RNA polymerase recruitment. Not absolutely required for transcription in vitro, but particularly important in cases where Tbp or Tfb function is not optimal. It dynamically alters the nucleic acid-binding properties of RNA polymerases by stabilizing the initiation complex and destabilizing elongation complexes. Seems to translocate with the RNA polymerase following initiation and acts by binding to the non template strand of the transcription bubble in elongation complexes. The protein is Transcription factor E of Pyrobaculum calidifontis (strain DSM 21063 / JCM 11548 / VA1).